Here is a 130-residue protein sequence, read N- to C-terminus: Seminal plasma protein pB1 (130 aa).

An N-terminal signal peptide occupies residues 1–25 (MAPRLGIFLLWAGVSVFLPLDPVNG). Fibronectin type-II domains follow at residues 39–83 (TSDD…YCRS) and 84–130 (TDYA…WRYC). 4 cysteine pairs are disulfide-bonded: C44-C68, C58-C81, C89-C115, and C103-C130.

It belongs to the seminal plasma protein family. In terms of tissue distribution, component of seminal plasma.

It is found in the secreted. Its function is as follows. May form a complex with spermadhesin AQN-1 which possesses phosphorylcholine-binding activity. The protein is Seminal plasma protein pB1 of Sus scrofa (Pig).